The following is a 1443-amino-acid chain: Lysophospholipase NTE1 (1443 aa).

At 1 to 59 (MEEELAIEDLPRLTGTVSLNNGLLHSIYNETTVFKILRWSLVEIPKYILKLMSKNLEIN) the chain is on the lumenal side. Residues 60–80 (LNVSSILIITLLIAAGILVIV) form a helical membrane-spanning segment. The Cytoplasmic portion of the chain corresponds to 81-1443 (RYKFLTGYSE…RIKMYRRNTM (1363 aa)). Residues 103-118 (ALGQQSTNYPKSTSSG) are compositionally biased toward polar residues. 2 disordered regions span residues 103–122 (ALGQ…LFVE) and 199–251 (KYDE…GKMH). The span at 210–235 (EGEEADEDDEEEEKEVGDDGDDEMDV) shows a compositional bias: acidic residues. A nucleoside 3',5'-cyclic phosphate-binding positions include 619-750 (LYKR…LKSL) and 746-871 (KLKS…VASK). The region spanning 1136–1300 (LVLGGGGSRG…LDNLPVMEMK (165 aa)) is the PNPLA domain. Positions 1140 to 1145 (GGGSRG) match the GXGXXG motif. Residues 1167-1171 (GTSIG) carry the GXSXG motif. Residue Ser-1169 is the Nucleophile of the active site. The Proton acceptor role is filled by Asp-1287. A DGA/G motif is present at residues 1287 to 1289 (DGG).

Belongs to the NTE family.

The protein localises to the endoplasmic reticulum membrane. It catalyses the reaction a 1-acyl-sn-glycero-3-phosphocholine + H2O = sn-glycerol 3-phosphocholine + a fatty acid + H(+). Its activity is regulated as follows. Inhibited by organophosphorus esters. Functionally, intracellular phospholipase B that catalyzes the double deacylation of phosphatidylcholine (PC) to glycerophosphocholine (GroPCho). Plays an important role in membrane lipid homeostasis. Responsible for the rapid PC turnover in response to inositol, elevated temperatures, or when choline is present in the growth medium. The protein is Lysophospholipase NTE1 (NTE1) of Lodderomyces elongisporus (strain ATCC 11503 / CBS 2605 / JCM 1781 / NBRC 1676 / NRRL YB-4239) (Yeast).